Here is a 190-residue protein sequence, read N- to C-terminus: uncharacterized protein (190 aa).

Residues methionine 1 to lysine 55 lie on the Cytoplasmic side of the membrane. Residues leucine 56–valine 76 form a helical membrane-spanning segment. The Extracellular segment spans residues arginine 77 to arginine 80. A helical membrane pass occupies residues glycine 81–leucine 101. Residues arginine 102–serine 123 are Cytoplasmic-facing. Residues isoleucine 124 to valine 144 form a helical membrane-spanning segment. Over glutamate 145–threonine 149 the chain is Extracellular. A helical membrane pass occupies residues valine 150–alanine 170. Over arginine 171–alanine 190 the chain is Cytoplasmic.

The protein localises to the membrane. This is an uncharacterized protein from Saccharomyces cerevisiae (strain ATCC 204508 / S288c) (Baker's yeast).